A 358-amino-acid chain; its full sequence is Sulfate/thiosulfate import ATP-binding protein CysA 1 (358 aa).

In terms of domain architecture, ABC transporter spans isoleucine 3–leucine 237. Residue glycine 35–threonine 42 coordinates ATP.

It belongs to the ABC transporter superfamily. Sulfate/tungstate importer (TC 3.A.1.6) family. As to quaternary structure, the complex is composed of two ATP-binding proteins (CysA), two transmembrane proteins (CysT and CysW) and a solute-binding protein (CysP).

The protein localises to the cell inner membrane. The catalysed reaction is sulfate(out) + ATP + H2O = sulfate(in) + ADP + phosphate + H(+). It catalyses the reaction thiosulfate(out) + ATP + H2O = thiosulfate(in) + ADP + phosphate + H(+). In terms of biological role, part of the ABC transporter complex CysAWTP involved in sulfate/thiosulfate import. Responsible for energy coupling to the transport system. This Chromobacterium violaceum (strain ATCC 12472 / DSM 30191 / JCM 1249 / CCUG 213 / NBRC 12614 / NCIMB 9131 / NCTC 9757 / MK) protein is Sulfate/thiosulfate import ATP-binding protein CysA 1.